Reading from the N-terminus, the 809-residue chain is Phenylalanine--tRNA ligase beta subunit (809 aa).

The tRNA-binding domain maps to 39-152 (KDKWPNVYVG…ADAPVGMLAS (114 aa)). The 89-residue stretch at 404–492 (KDRNSVVLSL…RIAGYDTIPC (89 aa)) folds into the B5 domain. Mg(2+) contacts are provided by Asp470, Asp476, Glu479, and Glu480. The FDX-ACB domain maps to 717 to 808 (NRFPSVERDL…LNTETGAVLR (92 aa)).

The protein belongs to the phenylalanyl-tRNA synthetase beta subunit family. Type 1 subfamily. As to quaternary structure, tetramer of two alpha and two beta subunits. It depends on Mg(2+) as a cofactor.

The protein localises to the cytoplasm. It catalyses the reaction tRNA(Phe) + L-phenylalanine + ATP = L-phenylalanyl-tRNA(Phe) + AMP + diphosphate + H(+). This Dehalococcoides mccartyi (strain ATCC BAA-2266 / KCTC 15142 / 195) (Dehalococcoides ethenogenes (strain 195)) protein is Phenylalanine--tRNA ligase beta subunit.